We begin with the raw amino-acid sequence, 421 residues long: Histidine--tRNA ligase (421 aa).

This sequence belongs to the class-II aminoacyl-tRNA synthetase family. Homodimer.

Its subcellular location is the cytoplasm. The enzyme catalyses tRNA(His) + L-histidine + ATP = L-histidyl-tRNA(His) + AMP + diphosphate + H(+). This is Histidine--tRNA ligase from Francisella tularensis subsp. tularensis (strain SCHU S4 / Schu 4).